A 174-amino-acid polypeptide reads, in one-letter code: Ribosome maturation factor RimM (174 aa).

Residues 96–170 enclose the PRC barrel domain; it reads PDEFYDHELE…YVVIDPPEGL (75 aa).

Belongs to the RimM family. In terms of assembly, binds ribosomal protein uS19.

Its subcellular location is the cytoplasm. Its function is as follows. An accessory protein needed during the final step in the assembly of 30S ribosomal subunit, possibly for assembly of the head region. Essential for efficient processing of 16S rRNA. May be needed both before and after RbfA during the maturation of 16S rRNA. It has affinity for free ribosomal 30S subunits but not for 70S ribosomes. This chain is Ribosome maturation factor RimM, found in Nocardia farcinica (strain IFM 10152).